A 227-amino-acid polypeptide reads, in one-letter code: Cytochrome c oxidase subunit 2 (227 aa).

Over 1 to 14 (MAYPMQLGFQDATS) the chain is Mitochondrial intermembrane. The helical transmembrane segment at 15–45 (PIMEELLHFHDHTLMIVFLISSLVLYVISLM) threads the bilayer. Residues 46–59 (LTTKLTHTSTMDAQ) lie on the Mitochondrial matrix side of the membrane. A helical membrane pass occupies residues 60 to 87 (EVETIWTILPAIILILIALPSLRILYMM). Residues 88 to 227 (DEINNPSLTV…YFEKWSASML (140 aa)) are Mitochondrial intermembrane-facing. Cu cation contacts are provided by His-161, Cys-196, Glu-198, Cys-200, His-204, and Met-207. Glu-198 is a Mg(2+) binding site. Tyr-218 carries the post-translational modification Phosphotyrosine.

Belongs to the cytochrome c oxidase subunit 2 family. As to quaternary structure, component of the cytochrome c oxidase (complex IV, CIV), a multisubunit enzyme composed of 14 subunits. The complex is composed of a catalytic core of 3 subunits MT-CO1, MT-CO2 and MT-CO3, encoded in the mitochondrial DNA, and 11 supernumerary subunits COX4I, COX5A, COX5B, COX6A, COX6B, COX6C, COX7A, COX7B, COX7C, COX8 and NDUFA4, which are encoded in the nuclear genome. The complex exists as a monomer or a dimer and forms supercomplexes (SCs) in the inner mitochondrial membrane with NADH-ubiquinone oxidoreductase (complex I, CI) and ubiquinol-cytochrome c oxidoreductase (cytochrome b-c1 complex, complex III, CIII), resulting in different assemblies (supercomplex SCI(1)III(2)IV(1) and megacomplex MCI(2)III(2)IV(2)). Found in a complex with TMEM177, COA6, COX18, COX20, SCO1 and SCO2. Interacts with TMEM177 in a COX20-dependent manner. Interacts with COX20. Interacts with COX16. Cu cation serves as cofactor.

The protein resides in the mitochondrion inner membrane. It catalyses the reaction 4 Fe(II)-[cytochrome c] + O2 + 8 H(+)(in) = 4 Fe(III)-[cytochrome c] + 2 H2O + 4 H(+)(out). Functionally, component of the cytochrome c oxidase, the last enzyme in the mitochondrial electron transport chain which drives oxidative phosphorylation. The respiratory chain contains 3 multisubunit complexes succinate dehydrogenase (complex II, CII), ubiquinol-cytochrome c oxidoreductase (cytochrome b-c1 complex, complex III, CIII) and cytochrome c oxidase (complex IV, CIV), that cooperate to transfer electrons derived from NADH and succinate to molecular oxygen, creating an electrochemical gradient over the inner membrane that drives transmembrane transport and the ATP synthase. Cytochrome c oxidase is the component of the respiratory chain that catalyzes the reduction of oxygen to water. Electrons originating from reduced cytochrome c in the intermembrane space (IMS) are transferred via the dinuclear copper A center (CU(A)) of subunit 2 and heme A of subunit 1 to the active site in subunit 1, a binuclear center (BNC) formed by heme A3 and copper B (CU(B)). The BNC reduces molecular oxygen to 2 water molecules using 4 electrons from cytochrome c in the IMS and 4 protons from the mitochondrial matrix. The polypeptide is Cytochrome c oxidase subunit 2 (MT-CO2) (Rusa unicolor (Sambar)).